Reading from the N-terminus, the 801-residue chain is Probable phosphoketolase (801 aa).

Belongs to the XFP family. It depends on thiamine diphosphate as a cofactor.

The chain is Probable phosphoketolase from Bradyrhizobium diazoefficiens (strain JCM 10833 / BCRC 13528 / IAM 13628 / NBRC 14792 / USDA 110).